An 801-amino-acid chain; its full sequence is Probable inorganic carbon transporter subunit DabA (801 aa).

Zn(2+) is bound by residues C298, D300, H481, and C496. Positions 575 to 596 are disordered; it reads RENAAAERAESMGSDASSGVSE.

Belongs to the inorganic carbon transporter (TC 9.A.2) DabA family. Forms a complex with DabB. It depends on Zn(2+) as a cofactor.

It is found in the cell membrane. Functionally, part of an energy-coupled inorganic carbon pump. This is Probable inorganic carbon transporter subunit DabA from Haloarcula marismortui (strain ATCC 43049 / DSM 3752 / JCM 8966 / VKM B-1809) (Halobacterium marismortui).